Consider the following 131-residue polypeptide: Sulfurtransferase TusD (131 aa).

Cysteine 81 serves as the catalytic Cysteine persulfide intermediate.

The protein belongs to the DsrE/TusD family. Heterohexamer, formed by a dimer of trimers. The hexameric TusBCD complex contains 2 copies each of TusB, TusC and TusD. The TusBCD complex interacts with TusE.

It localises to the cytoplasm. Part of a sulfur-relay system required for 2-thiolation of 5-methylaminomethyl-2-thiouridine (mnm(5)s(2)U) at tRNA wobble positions. Accepts sulfur from TusA and transfers it in turn to TusE. This Yersinia pseudotuberculosis serotype O:1b (strain IP 31758) protein is Sulfurtransferase TusD.